Reading from the N-terminus, the 134-residue chain is Small ribosomal subunit protein uS11 (134 aa).

Belongs to the universal ribosomal protein uS11 family. Part of the 30S ribosomal subunit. Interacts with proteins S7 and S18. Binds to IF-3.

In terms of biological role, located on the platform of the 30S subunit, it bridges several disparate RNA helices of the 16S rRNA. Forms part of the Shine-Dalgarno cleft in the 70S ribosome. The sequence is that of Small ribosomal subunit protein uS11 from Polaromonas naphthalenivorans (strain CJ2).